The following is a 78-amino-acid chain: uncharacterized protein (78 aa).

This is an uncharacterized protein from Saccharomyces cerevisiae (strain ATCC 204508 / S288c) (Baker's yeast).